Here is a 509-residue protein sequence, read N- to C-terminus: Histone deacetylase 2 (509 aa).

The tract at residues 24 to 338 (RRVCYFYDPE…WCYETGVALG (315 aa)) is histone deacetylase. Catalysis depends on H158, which acts as the Proton donor/acceptor. Residues D193, H195, and D281 each coordinate Zn(2+). Residues 394–509 (PSVQFEERIP…NAKNEPGSSL (116 aa)) form a disordered region. Composition is skewed to basic and acidic residues over residues 398–409 (FEERIPETKLPE), 418–434 (DERH…DHKP), and 448–472 (VKRE…HKVP). Over residues 481 to 494 (SSKQVPTADANSMA) the composition is skewed to polar residues.

Belongs to the histone deacetylase family. HD Type 1 subfamily. It depends on Zn(2+) as a cofactor. In terms of tissue distribution, expressed in roots.

Its subcellular location is the nucleus. The enzyme catalyses N(6)-acetyl-L-lysyl-[histone] + H2O = L-lysyl-[histone] + acetate. In terms of biological role, responsible for the deacetylation of lysine residues on the N-terminal part of the core histones (H2A, H2B, H3 and H4). Histone deacetylation gives a tag for epigenetic repression and plays an important role in transcriptional regulation, cell cycle progression and developmental events. Histone deacetylases act via the formation of large multiprotein complexes. This chain is Histone deacetylase 2, found in Oryza sativa subsp. japonica (Rice).